The following is a 46-amino-acid chain: Lantibiotic streptin (46 aa).

A propeptide spanning residues 1–24 is cleaved from the precursor; it reads MNNTIKDFDLDLKTNKKDTATPYV.

Belongs to the type A lantibiotic family. Maturation of lantibiotics involves the enzymatic conversion of Thr, and Ser into dehydrated AA and the formation of thioether bonds with cysteine. This is followed by membrane translocation and cleavage of the modified precursor.

Functionally, lanthionine-containing peptide antibiotic (lantibiotic) active on certain Gram-positive bacteria. The bactericidal activity of lantibiotics is based on depolarization of energized bacterial cytoplasmic membranes, initiated by the formation of aqueous transmembrane pores. This is Lantibiotic streptin (srtA) from Streptococcus pyogenes serotype M1.